A 384-amino-acid polypeptide reads, in one-letter code: MELEGLWWKGQLAVDIHQTLRYKELKLPSYKGQSPQLNLRRYFADLIAIVSNRFKLCPTARHLAVYLLDLFMDRYDISIQQLHIVALSCLLLASKFEDKEDRVPKLEQLNSLGCMTNMNLVLTKQNLLHMELLLLETFEWNLCLPTPAHFIEYYLSIAVHDTDLHDGWPMICLEKTKIYMAKYADYFLEVSLQDHMFLNYGPSLVAAACVAASRIILRLSPSWPTRLHRLTVYAWDILVPCIERLLIAHDNDVKEASKHKNHLSHTAAQCLFPPASPAPPQAHVQQHMPPYLQSQHHQLQFHHSAPQPQNCQPIITAAHASAFPLQTCASAIPTSIQARGHIQTTASVSLAAVPIEVKPCIGVSYNRSYQVNGHYSRLTQCFDR.

In terms of domain architecture, Cyclin N-terminal spans aspartate 15 to cysteine 143.

Belongs to the cyclin family. Cyclin J subfamily.

This chain is Cyclin-J (ccnj), found in Xenopus laevis (African clawed frog).